Consider the following 907-residue polypeptide: Protein translocase subunit SecA (907 aa).

ATP contacts are provided by residues Gln-87, 105–109 (GEGKT), and Asp-512. A disordered region spans residues 834–907 (QEDVERMEEQ…KKYKQCHGKI (74 aa)). Basic and acidic residues-rich tracts occupy residues 836–853 (DVER…EAAR) and 873–888 (EEAH…KVGR). Cys-892, Cys-894, Cys-903, and His-904 together coordinate Zn(2+). Positions 898 to 907 (KKYKQCHGKI) are enriched in basic residues.

The protein belongs to the SecA family. In terms of assembly, monomer and homodimer. Part of the essential Sec protein translocation apparatus which comprises SecA, SecYEG and auxiliary proteins SecDF-YajC and YidC. It depends on Zn(2+) as a cofactor.

Its subcellular location is the cell inner membrane. The protein localises to the cytoplasm. The catalysed reaction is ATP + H2O + cellular proteinSide 1 = ADP + phosphate + cellular proteinSide 2.. Part of the Sec protein translocase complex. Interacts with the SecYEG preprotein conducting channel. Has a central role in coupling the hydrolysis of ATP to the transfer of proteins into and across the cell membrane, serving both as a receptor for the preprotein-SecB complex and as an ATP-driven molecular motor driving the stepwise translocation of polypeptide chains across the membrane. The sequence is that of Protein translocase subunit SecA from Aliivibrio fischeri (strain ATCC 700601 / ES114) (Vibrio fischeri).